A 695-amino-acid polypeptide reads, in one-letter code: Segment polarity protein dishevelled homolog DVL-1 (695 aa).

The 85-residue stretch at 1–85 (MAETKIIYHM…RVVSWLVLAE (85 aa)) folds into the DIX domain. Residues 89 to 236 (SDAGSQGTDS…RLRQTDRASS (148 aa)) form a disordered region. Positions 142–151 (SHRRERARRR) are enriched in basic residues. Basic and acidic residues predominate over residues 152-171 (NRDEAARTNGHPRGDRRREL). The segment covering 177–192 (SASTVLSSELESSSFI) has biased composition (low complexity). Ser-194 is modified (phosphoserine). The span at 201–214 (SRLSSSTEQSTSSR) shows a compositional bias: low complexity. A compositionally biased stretch (basic residues) spans 215-228 (LIRKHKCRRRKQRL). The PDZ domain maps to 251–323 (TVTLNMERHH…NDDAVRVLRE (73 aa)). Positions 425–499 (PDSGLEIRDR…SEQCYYVFGD (75 aa)) constitute a DEP domain. Positions 551–580 (PAYQDPGFSYGSGSAGSQQSEGSKSSGSTR) are enriched in low complexity. Residues 551–641 (PAYQDPGFSY…SQASAVAPGL (91 aa)) are disordered. Positions 622–635 (SQLSRGSSPRSQAS) are enriched in polar residues.

This sequence belongs to the DSH family. In terms of assembly, interacts with BRD7 and INVS. Interacts (via PDZ domain) with the VANGL1 and VANGL2 (via C-terminus). Interacts (via PDZ domain) with NXN. Interacts with CXXC4. Interacts with ARRB1; the interaction is enhanced by phosphorylation of DVL1. Interacts with CYLD. Interacts (via PDZ domain) with RYK. Self-associates (via DIX domain) and forms higher homooligomers. Interacts (via PDZ domain) with DACT1 and FZD7, where DACT1 and FZD7 compete for the same binding site. Interacts (via DEP domain) with MUSK; the interaction is direct and mediates the formation a DVL1, MUSK and PAK1 ternary complex involved in AChR clustering. Interacts (via PDZ domain) with TMEM88. Interacts with DCDC2. Interacts with FOXK2. Interacts with PKD1 (via extracellular domain). Interacts (via PDZ domain) with CCDC88C/DAPLE; competes with CCDC88C for binding to frizzled receptor FZD7 and dissociates from CCDC88C following initiation of non-canonical Wnt signaling when CCDC88C displaces DVL1 from ligand-activated FZD7. In terms of processing, ubiquitinated; undergoes both 'Lys-48'-linked ubiquitination, leading to its subsequent degradation by the ubiquitin-proteasome pathway, and 'Lys-63'-linked ubiquitination. The interaction with INVS is required for ubiquitination. Deubiquitinated by CYLD, which acts on 'Lys-63'-linked ubiquitin chains.

The protein resides in the cell membrane. The protein localises to the cytoplasm. It localises to the cytosol. It is found in the cytoplasmic vesicle. Participates in Wnt signaling by binding to the cytoplasmic C-terminus of frizzled family members and transducing the Wnt signal to down-stream effectors. Plays a role both in canonical and non-canonical Wnt signaling. Plays a role in the signal transduction pathways mediated by multiple Wnt genes. Required for LEF1 activation upon WNT1 and WNT3A signaling. DVL1 and PAK1 form a ternary complex with MUSK which is important for MUSK-dependent regulation of AChR clustering during the formation of the neuromuscular junction (NMJ). This Rattus norvegicus (Rat) protein is Segment polarity protein dishevelled homolog DVL-1 (Dvl1).